The chain runs to 471 residues: Glutamate--tRNA ligase (471 aa).

The 'HIGH' region motif lies at 10–20; sequence PSPTGFLHIGG. The tract at residues 117 to 137 is disordered; the sequence is GRPPRYDGRWRDRPASERPTD. The 'KMSKS' region signature appears at 239-243; the sequence is KLSKR. Residue Lys242 participates in ATP binding.

Belongs to the class-I aminoacyl-tRNA synthetase family. Glutamate--tRNA ligase type 1 subfamily. Monomer.

The protein resides in the cytoplasm. The catalysed reaction is tRNA(Glu) + L-glutamate + ATP = L-glutamyl-tRNA(Glu) + AMP + diphosphate. Its function is as follows. Catalyzes the attachment of glutamate to tRNA(Glu) in a two-step reaction: glutamate is first activated by ATP to form Glu-AMP and then transferred to the acceptor end of tRNA(Glu). The chain is Glutamate--tRNA ligase from Azorhizobium caulinodans (strain ATCC 43989 / DSM 5975 / JCM 20966 / LMG 6465 / NBRC 14845 / NCIMB 13405 / ORS 571).